The sequence spans 210 residues: MTSQRVRDRLVERLRECGIQDERVLSTIRIVPRHLFIDEALALRAYEDTALPIGHGQTISQPWIVARMTEAVMQVAPKKILEIGTGSGYQSAILASLGLEVYTIERIGKLLRQARKRFRQLGIKIRSKHDDGSTGWTEHAPYNAILVTAAAPTLIDTLIEQLAIGGRLVAPVGTASEQALVQLTRTIDGSITHEILEPVTFVSLLPGMLD.

Serine 60 is an active-site residue.

It belongs to the methyltransferase superfamily. L-isoaspartyl/D-aspartyl protein methyltransferase family.

The protein resides in the cytoplasm. The enzyme catalyses [protein]-L-isoaspartate + S-adenosyl-L-methionine = [protein]-L-isoaspartate alpha-methyl ester + S-adenosyl-L-homocysteine. Its function is as follows. Catalyzes the methyl esterification of L-isoaspartyl residues in peptides and proteins that result from spontaneous decomposition of normal L-aspartyl and L-asparaginyl residues. It plays a role in the repair and/or degradation of damaged proteins. The polypeptide is Protein-L-isoaspartate O-methyltransferase (Xylella fastidiosa (strain M12)).